The chain runs to 136 residues: Large ribosomal subunit protein uL16c (136 aa).

Belongs to the universal ribosomal protein uL16 family. In terms of assembly, part of the 50S ribosomal subunit.

Its subcellular location is the plastid. It is found in the chloroplast. In Citrus sinensis (Sweet orange), this protein is Large ribosomal subunit protein uL16c.